Consider the following 788-residue polypeptide: uncharacterized protein (788 aa).

An Adrift-type SAM-dependent 2'-O-MTase domain is found at glutamate 485 to glycine 693. S-adenosyl-L-methionine is bound by residues glycine 521 and aspartate 604. Residue lysine 645 is the Proton acceptor of the active site.

This is an uncharacterized protein from Acanthamoeba polyphaga (Amoeba).